Consider the following 202-residue polypeptide: Proteasome subunit beta 1 (202 aa).

Position 1 (Met-1) is a propeptide, removed in mature form; by autocatalysis. Thr-2 serves as the catalytic Nucleophile.

It belongs to the peptidase T1B family. In terms of assembly, the 20S proteasome core is composed of 14 alpha and 14 beta subunits that assemble into four stacked heptameric rings, resulting in a barrel-shaped structure. The two inner rings, each composed of seven catalytic beta subunits, are sandwiched by two outer rings, each composed of seven alpha subunits. The catalytic chamber with the active sites is on the inside of the barrel. Has a gated structure, the ends of the cylinder being occluded by the N-termini of the alpha-subunits. Is capped at one or both ends by the proteasome regulatory ATPase, PAN.

Its subcellular location is the cytoplasm. The enzyme catalyses Cleavage of peptide bonds with very broad specificity.. Its activity is regulated as follows. The formation of the proteasomal ATPase PAN-20S proteasome complex, via the docking of the C-termini of PAN into the intersubunit pockets in the alpha-rings, triggers opening of the gate for substrate entry. Interconversion between the open-gate and close-gate conformations leads to a dynamic regulation of the 20S proteasome proteolysis activity. In terms of biological role, component of the proteasome core, a large protease complex with broad specificity involved in protein degradation. This Pyrobaculum arsenaticum (strain DSM 13514 / JCM 11321 / PZ6) protein is Proteasome subunit beta 1.